The primary structure comprises 673 residues: UvrABC system protein B (673 aa).

The Helicase ATP-binding domain maps to 26-415 (EGLEDGLAHQ…GDVVDQVVRP (390 aa)). ATP is bound at residue 39–46 (GVTGSGKT). The short motif at 92–115 (YYDYYQPEAYVPSSDTFIEKDASV) is the Beta-hairpin element. In terms of domain architecture, Helicase C-terminal spans 431-597 (QVDDLLSEIR…GLNKKVVDIL (167 aa)). A disordered region spans residues 608 to 627 (AKGRGKSRPIVEPDNVPMDM). The UVR domain occupies 633 to 668 (QQKIHELEGLMMQHAQNLEFEEAAQIRDQLHQLREL).

This sequence belongs to the UvrB family. Forms a heterotetramer with UvrA during the search for lesions. Interacts with UvrC in an incision complex.

The protein localises to the cytoplasm. In terms of biological role, the UvrABC repair system catalyzes the recognition and processing of DNA lesions. A damage recognition complex composed of 2 UvrA and 2 UvrB subunits scans DNA for abnormalities. Upon binding of the UvrA(2)B(2) complex to a putative damaged site, the DNA wraps around one UvrB monomer. DNA wrap is dependent on ATP binding by UvrB and probably causes local melting of the DNA helix, facilitating insertion of UvrB beta-hairpin between the DNA strands. Then UvrB probes one DNA strand for the presence of a lesion. If a lesion is found the UvrA subunits dissociate and the UvrB-DNA preincision complex is formed. This complex is subsequently bound by UvrC and the second UvrB is released. If no lesion is found, the DNA wraps around the other UvrB subunit that will check the other stand for damage. The sequence is that of UvrABC system protein B from Escherichia coli O6:H1 (strain CFT073 / ATCC 700928 / UPEC).